The chain runs to 199 residues: CASP-like protein 1B2 (199 aa).

At 1 to 22 (MALQSEEKLEVGYSSLQPKTRK) the chain is on the cytoplasmic side. The helical transmembrane segment at 23–43 (WVLLMLRVLAFFATAAATVVM) threads the bilayer. At 44-74 (GLNKETKTLVVATVGSTPIKASLAAKFQHTP) the chain is on the extracellular side. Residues 75 to 95 (AFVFFVIANGLASIHNLVMIM) form a helical membrane-spanning segment. At 96–112 (GDLFGQKLDYKGLRLAM) the chain is on the cytoplasmic side. The chain crosses the membrane as a helical span at residues 113 to 133 (IAILDMMTVALVSGGVSAAAF). Topologically, residues 134–163 (MAELGKNGNSHARWNKICDKFETFCDHGGG) are extracellular. A helical transmembrane segment spans residues 164-184 (ALIASFAGLILMLIISVMSII). Residues 185–199 (KLLIKPKPDSTIVVP) lie on the Cytoplasmic side of the membrane.

It belongs to the Casparian strip membrane proteins (CASP) family. Homodimer and heterodimers.

It localises to the cell membrane. The polypeptide is CASP-like protein 1B2 (Populus trichocarpa (Western balsam poplar)).